The primary structure comprises 570 residues: Proline--tRNA ligase (570 aa).

It belongs to the class-II aminoacyl-tRNA synthetase family. ProS type 1 subfamily. Homodimer.

Its subcellular location is the cytoplasm. The enzyme catalyses tRNA(Pro) + L-proline + ATP = L-prolyl-tRNA(Pro) + AMP + diphosphate. Catalyzes the attachment of proline to tRNA(Pro) in a two-step reaction: proline is first activated by ATP to form Pro-AMP and then transferred to the acceptor end of tRNA(Pro). As ProRS can inadvertently accommodate and process non-cognate amino acids such as alanine and cysteine, to avoid such errors it has two additional distinct editing activities against alanine. One activity is designated as 'pretransfer' editing and involves the tRNA(Pro)-independent hydrolysis of activated Ala-AMP. The other activity is designated 'posttransfer' editing and involves deacylation of mischarged Ala-tRNA(Pro). The misacylated Cys-tRNA(Pro) is not edited by ProRS. The polypeptide is Proline--tRNA ligase (proS) (Aquifex aeolicus (strain VF5)).